A 520-amino-acid polypeptide reads, in one-letter code: Calcium-dependent protein kinase 25 (520 aa).

The N-myristoyl glycine moiety is linked to residue G2. A disordered region spans residues 31–87; it reads PLKPQLQDKPPQPMLMNKDDDKTKLNDTHGDPKLLEGKEKPAQKQTSQGQGGRKCSD. The segment covering 47–72 has biased composition (basic and acidic residues); the sequence is NKDDDKTKLNDTHGDPKLLEGKEKPA. The Protein kinase domain occupies 132 to 390; sequence YNLGSKLGHG…AQQVLCHPWI (259 aa). Residues 138–146 and K161 contribute to the ATP site; that span reads LGHGQFGTT. Catalysis depends on D256, which acts as the Proton acceptor. Phosphoserine is present on S296. The tract at residues 396–426 is autoinhibitory domain; it reads APDTPLDTTVLSRLKKFSATDKLKKMALRVI. Residues 433–468 form the EF-hand 1 domain; it reads EEIHELRETFKTIDSGKSGRVTYKELKNGLERFNTN. Ca(2+)-binding residues include D446, S450, R452, E457, D483, E487, T489, and E494. In terms of domain architecture, EF-hand 2; degenerate spans 469-505; it reads LDNSDINSLMQIPTDVHLEDTVDYNEFIEAIVRLRQI.

The protein belongs to the protein kinase superfamily. Ser/Thr protein kinase family. CDPK subfamily.

The protein localises to the membrane. The enzyme catalyses L-seryl-[protein] + ATP = O-phospho-L-seryl-[protein] + ADP + H(+). It carries out the reaction L-threonyl-[protein] + ATP = O-phospho-L-threonyl-[protein] + ADP + H(+). Its activity is regulated as follows. Activated by calcium. Autophosphorylation may play an important role in the regulation of the kinase activity. In terms of biological role, may play a role in signal transduction pathways that involve calcium as a second messenger. The sequence is that of Calcium-dependent protein kinase 25 (CPK25) from Arabidopsis thaliana (Mouse-ear cress).